The chain runs to 357 residues: Ribosomal RNA large subunit methyltransferase M (357 aa).

S-adenosyl-L-methionine contacts are provided by residues S183, 216–219 (APGG), D235, D255, and D271. K300 acts as the Proton acceptor in catalysis.

Belongs to the class I-like SAM-binding methyltransferase superfamily. RNA methyltransferase RlmE family. RlmM subfamily. As to quaternary structure, monomer.

The protein resides in the cytoplasm. The catalysed reaction is cytidine(2498) in 23S rRNA + S-adenosyl-L-methionine = 2'-O-methylcytidine(2498) in 23S rRNA + S-adenosyl-L-homocysteine + H(+). Functionally, catalyzes the 2'-O-methylation at nucleotide C2498 in 23S rRNA. This Pseudomonas syringae pv. tomato (strain ATCC BAA-871 / DC3000) protein is Ribosomal RNA large subunit methyltransferase M.